A 509-amino-acid chain; its full sequence is uncharacterized protein (509 aa).

It localises to the virion. This is an uncharacterized protein from Acanthamoeba polyphaga mimivirus (APMV).